Here is a 98-residue protein sequence, read N- to C-terminus: MTSISLNLIMAFSLALAGVLIYRSHLMSTLLCLEGMMLSLFILMALLISHFHMLSVSMAPLILLVFSACEAGVGLALLVKTSTDYGNDYVQNLNLLQC.

Transmembrane regions (helical) follow at residues 1–21 (MTSI…GVLI), 28–48 (STLL…ALLI), and 59–79 (APLI…ALLV).

It belongs to the complex I subunit 4L family. As to quaternary structure, core subunit of respiratory chain NADH dehydrogenase (Complex I) which is composed of 45 different subunits.

Its subcellular location is the mitochondrion inner membrane. The catalysed reaction is a ubiquinone + NADH + 5 H(+)(in) = a ubiquinol + NAD(+) + 4 H(+)(out). Its function is as follows. Core subunit of the mitochondrial membrane respiratory chain NADH dehydrogenase (Complex I) which catalyzes electron transfer from NADH through the respiratory chain, using ubiquinone as an electron acceptor. Part of the enzyme membrane arm which is embedded in the lipid bilayer and involved in proton translocation. This chain is NADH-ubiquinone oxidoreductase chain 4L (MT-ND4L), found in Vombatus ursinus (Common wombat).